The primary structure comprises 308 residues: Probable D,D-dipeptide transport ATP-binding protein DdpF (308 aa).

The ABC transporter domain occupies 8–243 (LRDVHINFPA…PAHPYTRLLL (236 aa)). An ATP-binding site is contributed by 49–56 (GESGCGKS).

This sequence belongs to the ABC transporter superfamily. The complex is composed of two ATP-binding proteins (DdpD and DdpF), two transmembrane proteins (DdpB and DdpC) and a solute-binding protein (DdpA).

The protein resides in the cell inner membrane. In terms of biological role, part of the ABC transporter complex DdpABCDF, which is probably involved in D,D-dipeptide transport. Probably responsible for energy coupling to the transport system. In Escherichia coli (strain K12), this protein is Probable D,D-dipeptide transport ATP-binding protein DdpF.